A 73-amino-acid polypeptide reads, in one-letter code: Frenatin 3.1 (73 aa).

The signal sequence occupies residues 1–22 (MHFLKKSIFLVLFLGLVSLSIC). Positions 23–46 (EKEKREDQNEEEVDENEEASEEKR) are excised as a propeptide. The disordered stretch occupies residues 25-45 (EKREDQNEEEVDENEEASEEK). The segment covering 30-42 (QNEEEVDENEEAS) has biased composition (acidic residues).

Expressed by the skin glands.

The protein resides in the secreted. Antimicrobial peptide with activity against both Gram-positive and Gram-negative bacteria. The sequence is that of Frenatin 3.1 from Nyctimystes infrafrenatus (White-lipped tree frog).